Consider the following 323-residue polypeptide: Lipoyl synthase (323 aa).

[4Fe-4S] cluster contacts are provided by Cys-65, Cys-70, Cys-76, Cys-91, Cys-95, Cys-98, and Ser-304. Residues 77–293 (FNNGTATFMI…KKEALSIGFT (217 aa)) enclose the Radical SAM core domain.

It belongs to the radical SAM superfamily. Lipoyl synthase family. The cofactor is [4Fe-4S] cluster.

Its subcellular location is the cytoplasm. It catalyses the reaction [[Fe-S] cluster scaffold protein carrying a second [4Fe-4S](2+) cluster] + N(6)-octanoyl-L-lysyl-[protein] + 2 oxidized [2Fe-2S]-[ferredoxin] + 2 S-adenosyl-L-methionine + 4 H(+) = [[Fe-S] cluster scaffold protein] + N(6)-[(R)-dihydrolipoyl]-L-lysyl-[protein] + 4 Fe(3+) + 2 hydrogen sulfide + 2 5'-deoxyadenosine + 2 L-methionine + 2 reduced [2Fe-2S]-[ferredoxin]. The protein operates within protein modification; protein lipoylation via endogenous pathway; protein N(6)-(lipoyl)lysine from octanoyl-[acyl-carrier-protein]: step 2/2. Its function is as follows. Catalyzes the radical-mediated insertion of two sulfur atoms into the C-6 and C-8 positions of the octanoyl moiety bound to the lipoyl domains of lipoate-dependent enzymes, thereby converting the octanoylated domains into lipoylated derivatives. The sequence is that of Lipoyl synthase from Buchnera aphidicola subsp. Acyrthosiphon pisum (strain 5A).